Consider the following 311-residue polypeptide: tRNA-cytidine(32) 2-sulfurtransferase (311 aa).

A PP-loop motif motif is present at residues 58–63 (SGGKDS). Positions 133, 136, and 224 each coordinate [4Fe-4S] cluster.

It belongs to the TtcA family. Homodimer. Requires Mg(2+) as cofactor. [4Fe-4S] cluster is required as a cofactor.

It localises to the cytoplasm. The catalysed reaction is cytidine(32) in tRNA + S-sulfanyl-L-cysteinyl-[cysteine desulfurase] + AH2 + ATP = 2-thiocytidine(32) in tRNA + L-cysteinyl-[cysteine desulfurase] + A + AMP + diphosphate + H(+). The protein operates within tRNA modification. In terms of biological role, catalyzes the ATP-dependent 2-thiolation of cytidine in position 32 of tRNA, to form 2-thiocytidine (s(2)C32). The sulfur atoms are provided by the cysteine/cysteine desulfurase (IscS) system. The chain is tRNA-cytidine(32) 2-sulfurtransferase from Polaromonas sp. (strain JS666 / ATCC BAA-500).